The chain runs to 132 residues: uncharacterized protein (132 aa).

This is an uncharacterized protein from Bacillus subtilis (strain 168).